The sequence spans 122 residues: Large ribosomal subunit protein uL14 (122 aa).

It belongs to the universal ribosomal protein uL14 family. Part of the 50S ribosomal subunit. Forms a cluster with proteins L3 and L19. In the 70S ribosome, L14 and L19 interact and together make contacts with the 16S rRNA in bridges B5 and B8.

Its function is as follows. Binds to 23S rRNA. Forms part of two intersubunit bridges in the 70S ribosome. The protein is Large ribosomal subunit protein uL14 of Salinispora tropica (strain ATCC BAA-916 / DSM 44818 / JCM 13857 / NBRC 105044 / CNB-440).